Consider the following 760-residue polypeptide: Complement C2 (760 aa).

An N-terminal signal peptide occupies residues 1 to 18 (MAPLLALFYLLQLGPGLA). Sushi domains lie at 20 to 90 (LFCN…AVCK), 92 to 151 (VRCL…VCDN), and 154 to 212 (SHCP…ICRQ). Cystine bridges form between C22–C62, C49–C89, C94–C136, C122–C149, C156–C197, and C182–C210. 2 N-linked (GlcNAc...) asparagine glycosylation sites follow: N27 and N32. An N-linked (GlcNAc...) asparagine glycan is attached at N117. The VWFA domain maps to 261 to 459 (NLYLLLDASQ…KALQQIFEHM (199 aa)). Positions 267 to 271 (DASQS) match the MIDAS-like motif motif. S269 and S271 together coordinate Mg(2+). N-linked (GlcNAc...) asparagine glycosylation is found at N297 and N340. Residue T344 participates in Mg(2+) binding. Disulfide bonds link C470–C590, C499–C515, C593–C609, C647–C674, and C685–C715. In terms of domain architecture, Peptidase S1 spans 471-752 (GVGNMSANAS…LQPWLRQHLD (282 aa)). 2 N-linked (GlcNAc...) asparagine glycosylation sites follow: N474 and N478. Catalysis depends on charge relay system residues H514 and D570. N663 is a glycosylation site (N-linked (GlcNAc...) asparagine). S689 acts as the Charge relay system in catalysis.

Belongs to the peptidase S1 family. Serine protease component of the C3 convertase, also named C4bC2b, composed of the serine protease complement C2b and complement C4b. Serine protease component of the C5 convertase, also named C4bC2bC3b, composed of the serine protease complement C2b, complement C3b, as well as complement C4b. Mg(2+) serves as cofactor. Requires Mn(2+) as cofactor. In terms of processing, cleaved and activated by different proteases depending on the complement pathway to generate complement C2a and serine protease complement C2b chains. Cleaved and activated by C1S following activation by the classical complement system. Cleaved and activated by MASP2 following activation by the lectin complement system. Cleaved and activated by GZMK following activation by the GZMK complement system.

It localises to the secreted. Its subcellular location is the cell surface. The enzyme catalyses Selective cleavage of Arg-|-Ser bond in complement component C3 alpha-chain to form C3a and C3b, and Arg-|-Xaa bond in complement component C5 alpha-chain to form C5a and C5b.. Precursor of the catalytic component of the C3 and C5 convertase complexes, which are part of the complement pathway, a cascade of proteins that leads to phagocytosis and breakdown of pathogens and signaling that strengthens the adaptive immune system. Component C2 is part of the classical, lectin and GZMK complement systems. Its function is as follows. Catalytic component of the complement C3 and C5 convertase complexes. Following complement activation, recruited to the surface of pathogens by complement C4b opsonin to form the C3 convertase, or C3b and C4b opsonins to form the C5 convertase. As part of the C3 convertase, cleaves and activate C3 into C3a anaphylatoxin and C3b opsonin, the next components of the complement pathways. As part of the C5 convertase, cleaves and activate C5 into C5a anaphylatoxin and C5b component of the membrane attack complex. The sequence is that of Complement C2 from Mus musculus (Mouse).